A 314-amino-acid chain; its full sequence is tRNA pseudouridine synthase B (314 aa).

His43 lines the substrate pocket. Residue Asp48 is the Nucleophile of the active site. Positions 76, 179, and 200 each coordinate substrate.

The protein belongs to the pseudouridine synthase TruB family. Type 1 subfamily.

The enzyme catalyses uridine(55) in tRNA = pseudouridine(55) in tRNA. In terms of biological role, responsible for synthesis of pseudouridine from uracil-55 in the psi GC loop of transfer RNAs. The polypeptide is tRNA pseudouridine synthase B (Shigella flexneri).